A 316-amino-acid polypeptide reads, in one-letter code: UDP-N-acetylenolpyruvoylglucosamine reductase (316 aa).

Positions 27–225 (VGGKAERFYR…KTAINALLKK (199 aa)) constitute an FAD-binding PCMH-type domain. The active site involves arginine 190. Serine 239 serves as the catalytic Proton donor. Residue glutamate 309 is part of the active site.

Belongs to the MurB family. The cofactor is FAD.

It is found in the cytoplasm. It catalyses the reaction UDP-N-acetyl-alpha-D-muramate + NADP(+) = UDP-N-acetyl-3-O-(1-carboxyvinyl)-alpha-D-glucosamine + NADPH + H(+). Its pathway is cell wall biogenesis; peptidoglycan biosynthesis. Functionally, cell wall formation. The polypeptide is UDP-N-acetylenolpyruvoylglucosamine reductase (Coxiella burnetii (strain RSA 331 / Henzerling II)).